The chain runs to 504 residues: Sodium-coupled neutral amino acid transporter 3 (504 aa).

Serine 52 is modified (phosphoserine; by PKC). Residue asparagine 73 is glycosylated (N-linked (GlcNAc...) asparagine). The next 5 membrane-spanning stretches (helical) occupy residues 82-102 (GILG…LFLL), 105-125 (VALL…IVGI), 143-163 (AAAL…LYII), 186-206 (MDGN…LALM), and 212-232 (LGYS…AVIY). Cysteines 239 and 275 form a disulfide. 2 N-linked (GlcNAc...) asparagine glycosylation sites follow: asparagine 247 and asparagine 251. The helical transmembrane segment at 287–307 (AYTIPIMAFAFVCHPEVLPIY) threads the bilayer. N-linked (GlcNAc...) asparagine glycosylation occurs at asparagine 323. Transmembrane regions (helical) follow at residues 324 to 344 (LSIA…YLTF), 366 to 386 (ILCV…IVLF), 408 to 428 (VLIA…APNI), 431 to 451 (IFGI…PAIF), and 469 to 489 (ILAL…LSFI).

The protein belongs to the amino acid/polyamine transporter 2 family. In terms of processing, phosphorylation at Ser-52 induces internalization and sequestration into an intracellular reservoir. During dephosphorylation by protein phosphatases, can recycle back to the plasma membrane and regain activity. Prolonged phosphorylation results in its degradation. As to expression, highly expressed in liver. Expressed in skeletal muscle. Expressed in kidney, heart and brain. Not detected in gut, lung or spleen. Expressed ubiquitously in hepatocytes in liver whereas in kidney expression is restricted to the medulla. Within brain, expressed in glial cells. In the cerebellum, expressed on Bergmann glial fibers in the molecular layer and astrocytes in the granule layer. Expressed in brain kidney and liver (at protein level). In the adult kidney, highly expressed in the outer strip of the outer medulla and medullary rays penetrating into the kidney cortex (at protein level).

It localises to the cell membrane. It is found in the basolateral cell membrane. The enzyme catalyses L-glutamine(out) + Na(+)(out) + H(+)(in) = L-glutamine(in) + Na(+)(in) + H(+)(out). It catalyses the reaction L-asparagine(out) + Na(+)(out) + H(+)(in) = L-asparagine(in) + Na(+)(in) + H(+)(out). The catalysed reaction is L-histidine(out) + Na(+)(out) + H(+)(in) = L-histidine(in) + Na(+)(in) + H(+)(out). With respect to regulation, L-glutamine efflux and L-glutamine uptake are regulated by CO2/HCO3(-) through SLC4A4 leading to modulation of cytosolic pH and Na(+)concentration. Symporter that cotransports specific neutral amino acids and sodium ions, coupled to an H(+) antiporter activity. Mainly participates in the glutamate-GABA-glutamine cycle in brain where it transports L-glutamine from astrocytes in the intercellular space for the replenishment of both neurotransmitters glutamate and gamma-aminobutyric acid (GABA) in neurons. Also functions as the major influx transporter in ganglion cells mediating the uptake of glutamine. The transport activity is specific for L-glutamine, L-histidine and L-asparagine. The transport is electroneutral coupled to the cotransport of 1 Na(+) and the antiport of 1 H(+), pH dependent, saturable, Li(+) tolerant and functions in both direction depending on the concentration gradients of its substrates and cotransported ions. Also mediates an amino acid-gated H(+) conductance that is not stoichiometrically coupled to the amino acid transport but which influences the ionic gradients that drive the amino acid transport. In addition, may play a role in nitrogen metabolism, amino acid homeostasis, glucose metabolism and renal ammoniagenesis. This is Sodium-coupled neutral amino acid transporter 3 from Rattus norvegicus (Rat).